A 979-amino-acid polypeptide reads, in one-letter code: Zinc finger BED domain-containing protein 6 (979 aa).

The segment at 1-89 is required for nucleolar localization; it reads MSVCTLSVPV…ILAKKFSKDL (89 aa). The segment at 130–187 adopts a BED-type 1 zinc-finger fold; that stretch reads AKTSIVWHFFHVDPQYTWRAICNLCEKSVSRGKPGSHLGTSTLQRHLQARHSPHWTRA. The Zn(2+) site is built by cysteine 151, cysteine 154, histidine 175, and histidine 180. The disordered stretch occupies residues 207–232; the sequence is PSSGSNGSFEYIPTDPLDDNRMGKKH. A BED-type 2 zinc finger spans residues 264-321; the sequence is AKTSAVWNFFYTDPQHISRAVCNICKRSVSRGRPGSHLGTSTLQRHLQATHPIHWAVA. Positions 285, 288, 309, and 314 each coordinate Zn(2+). The segment at 333–383 is disordered; it reads DEAETERSDLLSDTLHGEKSTGSQDLTAEDLSDSDSDEPMLEVENRSESPI. Over residues 337–351 the composition is skewed to basic and acidic residues; sequence TERSDLLSDTLHGEK. Acidic residues predominate over residues 359-373; that stretch reads TAEDLSDSDSDEPML. Serine 381 bears the Phosphoserine mark. Residues 866 to 948 form an HATC (Hobo-Ac-Tam3) domain region; it reads VVDEYFKEKY…EQLMFLKMNL (83 aa).

In terms of tissue distribution, expressed in pancreatic islet cells (at protein level).

The protein resides in the nucleus. The protein localises to the nucleolus. It is found in the cytoplasm. Transcriptional repressor which binds to the consensus sequence 5'-GCTCGC-3', transcription regulation may be tissue-specific. Regulates the expression of target genes such as: IGF2, PGAP6/TMEM8, ENHO, and PIANP. Acts as a transcriptional repressor of growth factor IGF2, thereby negatively regulating postnatal growth of muscles and internal organs, especially in females. Negatively regulates myoblast differentiation and myoblast mitochondrial activity via its regulation of IGF2 transcription. Negatively regulates the cell cycle of myoblasts, potentially via transcriptional regulation of the E2F family of transcription factors such as: E2F1 and E2F2. Positively regulates the cell cycle and survival of pancreatic beta cells. Binds to the CDH2 gene and may directly repress CDH2 transcription. Probably by controlling CDH2 expression, regulates pancreatic beta cell adhesion, and formation of cell-to-cell junctions between pancreatic beta cells and neural crest stem cells. May also play a role in embryonic beta cell differentiation. May play a role in insulin sensitivity and glucose clearance. This is Zinc finger BED domain-containing protein 6 from Homo sapiens (Human).